The chain runs to 609 residues: Glutamine--fructose-6-phosphate aminotransferase [isomerizing] (609 aa).

Cys-2 (nucleophile; for GATase activity) is an active-site residue. Residues 2 to 218 (CGIVGAVAQR…EGDVAEVTRR (217 aa)) enclose the Glutamine amidotransferase type-2 domain. SIS domains follow at residues 286-426 (AAEF…HNGM) and 458-599 (LAED…VDQP). Lys-604 (for Fru-6P isomerization activity) is an active-site residue.

In terms of assembly, homodimer.

The protein resides in the cytoplasm. The catalysed reaction is D-fructose 6-phosphate + L-glutamine = D-glucosamine 6-phosphate + L-glutamate. In terms of biological role, catalyzes the first step in hexosamine metabolism, converting fructose-6P into glucosamine-6P using glutamine as a nitrogen source. The chain is Glutamine--fructose-6-phosphate aminotransferase [isomerizing] from Shewanella oneidensis (strain ATCC 700550 / JCM 31522 / CIP 106686 / LMG 19005 / NCIMB 14063 / MR-1).